We begin with the raw amino-acid sequence, 122 residues long: Large ribosomal subunit protein bL12 (122 aa).

This sequence belongs to the bacterial ribosomal protein bL12 family. Homodimer. Part of the ribosomal stalk of the 50S ribosomal subunit. Forms a multimeric L10(L12)X complex, where L10 forms an elongated spine to which 2 to 4 L12 dimers bind in a sequential fashion. Binds GTP-bound translation factors.

Its function is as follows. Forms part of the ribosomal stalk which helps the ribosome interact with GTP-bound translation factors. Is thus essential for accurate translation. This Xylella fastidiosa (strain M12) protein is Large ribosomal subunit protein bL12.